Consider the following 190-residue polypeptide: Potassium-transporting ATPase KdpC subunit (190 aa).

The helical transmembrane segment at L10 to G30 threads the bilayer.

It belongs to the KdpC family. In terms of assembly, the system is composed of three essential subunits: KdpA, KdpB and KdpC.

The protein localises to the cell inner membrane. Functionally, part of the high-affinity ATP-driven potassium transport (or Kdp) system, which catalyzes the hydrolysis of ATP coupled with the electrogenic transport of potassium into the cytoplasm. This subunit acts as a catalytic chaperone that increases the ATP-binding affinity of the ATP-hydrolyzing subunit KdpB by the formation of a transient KdpB/KdpC/ATP ternary complex. In Cronobacter sakazakii (strain ATCC BAA-894) (Enterobacter sakazakii), this protein is Potassium-transporting ATPase KdpC subunit.